We begin with the raw amino-acid sequence, 401 residues long: Argininosuccinate synthase (401 aa).

Residues 9 to 17 and A36 each bind ATP; that span reads AYSGGLDTS. L-citrulline contacts are provided by Y87 and S92. G117 provides a ligand contact to ATP. L-aspartate is bound by residues T119, N123, and D124. N123 contacts L-citrulline. Residues R127, S176, S185, E261, and Y273 each coordinate L-citrulline.

Belongs to the argininosuccinate synthase family. Type 1 subfamily. Homotetramer.

The protein localises to the cytoplasm. The enzyme catalyses L-citrulline + L-aspartate + ATP = 2-(N(omega)-L-arginino)succinate + AMP + diphosphate + H(+). Its pathway is amino-acid biosynthesis; L-arginine biosynthesis; L-arginine from L-ornithine and carbamoyl phosphate: step 2/3. This Syntrophobacter fumaroxidans (strain DSM 10017 / MPOB) protein is Argininosuccinate synthase.